The sequence spans 547 residues: Myrosinase 2 (547 aa).

A signal peptide spans 1–28 (MQHNTYIYILTMKLLGFALAILLVVATC). Disulfide bonds link Cys-36–Cys-460, Cys-44–Cys-456, and Cys-236–Cys-244. Residues Gln-69, His-171, and 216–217 (NQ) each bind a beta-D-glucoside. The N-linked (GlcNAc...) asparagine glycan is linked to Asn-340. Residue Tyr-359 coordinates a beta-D-glucoside. The N-linked (GlcNAc...) asparagine glycan is linked to Asn-384. Residues Glu-430, Trp-479, 486 to 487 (EF), and Phe-495 each bind a beta-D-glucoside. Glu-430 acts as the Nucleophile in catalysis. N-linked (GlcNAc...) asparagine glycosylation occurs at Asn-504.

Belongs to the glycosyl hydrolase 1 family. Interacts with MVP1. Expressed in phloem-associated cells.

The catalysed reaction is a thioglucoside + H2O = a sugar + a thiol.. In terms of biological role, may degrade glucosinolates (glucose residue linked by a thioglucoside bound to an amino acid derivative) to glucose, sulfate and any of the products: thiocyanates, isothiocyanates, nitriles, epithionitriles or oxazolidine-2-thiones. These toxic degradation products can deter insect herbivores. Seems to function in abscisic acid (ABA) and methyl jasmonate (MeJA) signaling in guard cells. Functionally redundant with TGG1. This Arabidopsis thaliana (Mouse-ear cress) protein is Myrosinase 2.